A 382-amino-acid polypeptide reads, in one-letter code: D-galactonate dehydratase (382 aa).

Residue aspartate 183 coordinates Mg(2+). Catalysis depends on histidine 185, which acts as the Proton donor. Residues glutamate 209 and glutamate 235 each contribute to the Mg(2+) site. The active-site Proton acceptor is the histidine 285.

This sequence belongs to the mandelate racemase/muconate lactonizing enzyme family. GalD subfamily. Mg(2+) is required as a cofactor.

The catalysed reaction is D-galactonate = 2-dehydro-3-deoxy-D-galactonate + H2O. The protein operates within carbohydrate acid metabolism; D-galactonate degradation; D-glyceraldehyde 3-phosphate and pyruvate from D-galactonate: step 1/3. Functionally, catalyzes the dehydration of D-galactonate to 2-keto-3-deoxy-D-galactonate. The chain is D-galactonate dehydratase from Salmonella dublin (strain CT_02021853).